A 389-amino-acid polypeptide reads, in one-letter code: 8-amino-7-oxononanoate synthase 2 (389 aa).

R21 serves as a coordination point for substrate. 108 to 109 (GY) is a pyridoxal 5'-phosphate binding site. H133 lines the substrate pocket. Pyridoxal 5'-phosphate-binding positions include S180, 205–208 (DDAH), and 234–237 (TLSK). K237 carries the N6-(pyridoxal phosphate)lysine modification. T351 is a substrate binding site.

It belongs to the class-II pyridoxal-phosphate-dependent aminotransferase family. BioF subfamily. In terms of assembly, homodimer. Pyridoxal 5'-phosphate is required as a cofactor.

The enzyme catalyses 6-carboxyhexanoyl-[ACP] + L-alanine + H(+) = (8S)-8-amino-7-oxononanoate + holo-[ACP] + CO2. Its pathway is cofactor biosynthesis; biotin biosynthesis. Catalyzes the decarboxylative condensation of pimeloyl-[acyl-carrier protein] and L-alanine to produce 8-amino-7-oxononanoate (AON), [acyl-carrier protein], and carbon dioxide. In Bacillus subtilis (strain 168), this protein is 8-amino-7-oxononanoate synthase 2 (bioF).